The chain runs to 344 residues: Olfactory receptor class A-like protein 4 (344 aa).

Residues 1 to 10 (MSEVLTVDAV) lie on the Extracellular side of the membrane. Residues 11 to 31 (LFGLLVFSGIIGNIMVIYVVF) form a helical membrane-spanning segment. At 32-47 (DCAKLCASRHLPPSDT) the chain is on the cytoplasmic side. A helical transmembrane segment spans residues 48–68 (ILVHLCLANLLTSVFRTVPIF). Residues 69-84 (VSDLGLQVWLTAGWCR) are Extracellular-facing. Residues C83 and C169 are joined by a disulfide bond. Residues 85–105 (VFMLLWVWWRAVGCWVTLALS) form a helical membrane-spanning segment. The Cytoplasmic portion of the chain corresponds to 106–130 (AFHCATLRRQHVSMGPLGHSRERRR). Residues 131–151 (VWVVLAVVWAANLLFSLPALV) traverse the membrane as a helical segment. The Extracellular portion of the chain corresponds to 152-186 (YTTQVRGNATVELMVISCTTRPLLGCVWEFPTFQQ). The N-linked (GlcNAc...) asparagine glycan is linked to N159. Residues 187–207 (GYAFASSSLALNEVLPLVLMV) traverse the membrane as a helical segment. The Cytoplasmic segment spans residues 208 to 246 (GTNLATLQALGKHIRTVRAGGSTGAELDRHVSSERKAGH). A helical membrane pass occupies residues 247–267 (VIMALVALFVGCWVLQVAAVT). The Extracellular portion of the chain corresponds to 268 to 279 (YYNHNRGAHAEG). The chain crosses the membrane as a helical span at residues 280–300 (LLTVAHFSASLFVGFSPLVVA). The Cytoplasmic portion of the chain corresponds to 301 to 344 (LGHGKLRRRISGILQSCMHRLKQTQDKPAEITEKDGRTTQSAMK). Residues 324 to 337 (TQDKPAEITEKDGR) are compositionally biased toward basic and acidic residues. Residues 324–344 (TQDKPAEITEKDGRTTQSAMK) are disordered.

Belongs to the G-protein coupled receptor 1 family. As to expression, highly expressed in the olfactory rosette. Specifically localizes to crypt neurons in the olfactory neuroepithelium. Colocalizes with the inhibitory G-protein gnaia in crypt neurons. Not detected in other tissues tested.

Its subcellular location is the cell membrane. Probable olfactory receptor. The protein is Olfactory receptor class A-like protein 4 (ora4) of Danio rerio (Zebrafish).